Here is a 325-residue protein sequence, read N- to C-terminus: Delta(1)-pyrroline-2-carboxylate reductase (325 aa).

It belongs to the ornithine cyclodeaminase/mu-crystallin family.

The enzyme catalyses L-proline + NAD(+) = 1-pyrroline-2-carboxylate + NADH + H(+). It carries out the reaction L-proline + NADP(+) = 1-pyrroline-2-carboxylate + NADPH + H(+). In terms of biological role, catalyzes the reduction of Delta(1)-pyrroline-2-carboxylate (Pyr2C) to L-proline, using preferentially NADPH over NADH as the electron donor. Is likely involved in a degradation pathway that converts trans-3-hydroxy-L-proline (t3LHyp) to L-proline, which allows B.cereus to grow on t3LHyp as a sole carbon source. This chain is Delta(1)-pyrroline-2-carboxylate reductase, found in Bacillus cereus (strain ATCC 14579 / DSM 31 / CCUG 7414 / JCM 2152 / NBRC 15305 / NCIMB 9373 / NCTC 2599 / NRRL B-3711).